We begin with the raw amino-acid sequence, 183 residues long: Bifunctional protein PyrR (183 aa).

The short motif at 102–114 (VVLVDDVLYTGRT) is the PRPP-binding element.

It belongs to the purine/pyrimidine phosphoribosyltransferase family. PyrR subfamily. Homodimer and homohexamer; in equilibrium.

The catalysed reaction is UMP + diphosphate = 5-phospho-alpha-D-ribose 1-diphosphate + uracil. Its function is as follows. Regulates transcriptional attenuation of the pyrimidine nucleotide (pyr) operon by binding in a uridine-dependent manner to specific sites on pyr mRNA. This disrupts an antiterminator hairpin in the RNA and favors formation of a downstream transcription terminator, leading to a reduced expression of downstream genes. In terms of biological role, also displays a weak uracil phosphoribosyltransferase activity which is not physiologically significant. This Listeria welshimeri serovar 6b (strain ATCC 35897 / DSM 20650 / CCUG 15529 / CIP 8149 / NCTC 11857 / SLCC 5334 / V8) protein is Bifunctional protein PyrR.